The primary structure comprises 206 residues: Elongation factor 1-beta (206 aa).

Ala-2 carries the N-acetylalanine modification. Residue Lys-13 forms a Glycyl lysine isopeptide (Lys-Gly) (interchain with G-Cter in ubiquitin) linkage. Ser-31 and Ser-86 each carry phosphoserine.

The protein belongs to the EF-1-beta/EF-1-delta family. As to quaternary structure, the eukaryotic elongation factor 1 complex (eEF1) is probably a heterohexamer. Two trimeric complexes, each composed of eEF1A (TEF1 or TEF2), eEF1Balpha (EFB1) and eEF1Bgamma (CAM1 or TEF4), are probably dimerized via the eF1Bgamma subunits. eEF1Balpha interacts directly with eEF1A. eEF1Balpha and eEF1Bgamma form the eEF1B subcomplex with the GEF activity. In terms of processing, S-thiolated in response to oxidative stress, probably inhibiting the protein and causing a reduction in protein synthesis.

Its pathway is protein biosynthesis; polypeptide chain elongation. In terms of biological role, catalytic subunit of the guanine nucleotide exchange factor (GEF) (eEF1B subcomplex) of the eukaryotic elongation factor 1 complex (eEF1). Stimulates the exchange of GDP for GTP on elongation factor 1A (eEF1A), probably by displacing GDP from the nucleotide binding pocket in eEF1A. The 30-fold higher concentration of GTP compared to GDP in cells favors the formation of eEF1A-GTP, which rapidly forms a ternary complex with aminoacyl-tRNA that in turn displaces eEF1B from the complex. This Saccharomyces cerevisiae (strain ATCC 204508 / S288c) (Baker's yeast) protein is Elongation factor 1-beta (EFB1).